The chain runs to 150 residues: Deoxyuridine 5'-triphosphate nucleotidohydrolase (150 aa).

Substrate-binding positions include 69-71 (RSG), N82, 86-88 (LID), and K96.

Belongs to the dUTPase family. Mg(2+) is required as a cofactor.

It carries out the reaction dUTP + H2O = dUMP + diphosphate + H(+). It functions in the pathway pyrimidine metabolism; dUMP biosynthesis; dUMP from dCTP (dUTP route): step 2/2. Its function is as follows. This enzyme is involved in nucleotide metabolism: it produces dUMP, the immediate precursor of thymidine nucleotides and it decreases the intracellular concentration of dUTP so that uracil cannot be incorporated into DNA. This chain is Deoxyuridine 5'-triphosphate nucleotidohydrolase, found in Neisseria meningitidis serogroup A / serotype 4A (strain DSM 15465 / Z2491).